Reading from the N-terminus, the 356-residue chain is MKTLLVMAGGTGGHIFPGIAVAEALRAKGWRIVWMGNPDGMEARIVPSRGYDTAWVRFGALRGKGLVRKLLLPVNLLVGFWQALGQLRRIKPDVVLGMGGYITFPGGMMAALLGWPLVLHEQNSVAGLANRVLAGVADRVLSGFPSVLKKAGWVGNPVREDIASVAAPAARFAGRSGPLNVLVVGGSLGAAVLNDTVPKALARIPLEFRPQVVHQAGEKQIDALRAAYAAAGVEGDLRPFIQDMAAAYAGADLVICRAGALTVAELAAVGVASLLVPFPHAVDDHQTGNARFLAEHGGAYLLPQNELDAERLAGILASLDRPQLLQMAEHARAQAKPRATEAVARACEELAEGRKA.

UDP-N-acetyl-alpha-D-glucosamine is bound by residues 11–13 (TGG), asparagine 123, arginine 159, serine 187, isoleucine 241, 260–265 (ALTVAE), and glutamine 286.

The protein belongs to the glycosyltransferase 28 family. MurG subfamily.

The protein localises to the cell inner membrane. It catalyses the reaction di-trans,octa-cis-undecaprenyl diphospho-N-acetyl-alpha-D-muramoyl-L-alanyl-D-glutamyl-meso-2,6-diaminopimeloyl-D-alanyl-D-alanine + UDP-N-acetyl-alpha-D-glucosamine = di-trans,octa-cis-undecaprenyl diphospho-[N-acetyl-alpha-D-glucosaminyl-(1-&gt;4)]-N-acetyl-alpha-D-muramoyl-L-alanyl-D-glutamyl-meso-2,6-diaminopimeloyl-D-alanyl-D-alanine + UDP + H(+). Its pathway is cell wall biogenesis; peptidoglycan biosynthesis. Cell wall formation. Catalyzes the transfer of a GlcNAc subunit on undecaprenyl-pyrophosphoryl-MurNAc-pentapeptide (lipid intermediate I) to form undecaprenyl-pyrophosphoryl-MurNAc-(pentapeptide)GlcNAc (lipid intermediate II). The protein is UDP-N-acetylglucosamine--N-acetylmuramyl-(pentapeptide) pyrophosphoryl-undecaprenol N-acetylglucosamine transferase of Azoarcus sp. (strain BH72).